A 453-amino-acid polypeptide reads, in one-letter code: Exopolyphosphatase PRUNE1 (453 aa).

Met1 carries the post-translational modification N-acetylmethionine. Residues Asp28, Asp30, Asp106, and Asp179 each coordinate Mn(2+). Residues 106-108 (DHH) carry the DHH motif motif. The essential for homodimerization stretch occupies residues 393–420 (SLLSGLSQDEEEPPLPPTPMNSLVDECP). The interval 396 to 419 (SGLSQDEEEPPLPPTPMNSLVDEC) is disordered. Ser399 carries the post-translational modification Phosphoserine. Thr410 carries the phosphothreonine modification. At Ser414 the chain carries Phosphoserine.

Belongs to the PPase class C family. Prune subfamily. In terms of assembly, homooligomer. Able to homodimerize via its C-terminal domain. Interacts with NME1. Interacts with GSK3; at focal adhesion complexes where paxillin and vinculin are colocalized. Mn(2+) serves as cofactor.

The protein resides in the cytoplasm. It localises to the nucleus. The protein localises to the cell junction. It is found in the focal adhesion. The enzyme catalyses diphosphate + H2O = 2 phosphate + H(+). With respect to regulation, activated by magnesium ions and inhibited by manganese ions. Inhibited by dipyridamole, moderately sensitive to IBMX and inhibited by vinpocetine. Functionally, phosphodiesterase (PDE) that has higher activity toward cAMP than cGMP, as substrate. Plays a role in cell proliferation, is able to induce cell motility and acts as a negative regulator of NME1. This Bos taurus (Bovine) protein is Exopolyphosphatase PRUNE1 (PRUNE1).